Reading from the N-terminus, the 107-residue chain is U1-lycotoxin-Ls1h (107 aa).

The signal sequence occupies residues 1–20; that stretch reads MMKVLVVVALLVTLISYSSS. A propeptide spanning residues 21 to 41 is cleaved from the precursor; the sequence is EGIDDLEADELLSLMANEQTR. Disulfide bonds link cysteine 44/cysteine 59, cysteine 51/cysteine 68, and cysteine 70/cysteine 84.

It belongs to the neurotoxin 19 (CSTX) family. 04 (U1-Lctx) subfamily. In terms of tissue distribution, expressed by the venom gland.

The protein localises to the secreted. The protein is U1-lycotoxin-Ls1h of Lycosa singoriensis (Wolf spider).